We begin with the raw amino-acid sequence, 457 residues long: MSLMLDDQPPMEAQYAEEGPGPGIFRAEPGDQQHPISQAVCWRSMRRGCAVLGALGLLAGAGVGSWLLVLYLCPAASQPISGTLQDEEITLSCSEASAEEALLPALPKTVSFRINSEDFLLEAQVRDQPRWLLVCHEGWSPALGLQICWSLGHLRLTHHKGVNLTDIKLNSSQEFAQLSPRLGGFLEEAWQPRNNCTSGQVVSLRCSECGARPLASRIVGGQSVAPGRWPWQASVALGFRHTCGGSVLAPRWVVTAAHCMHSFRLARLSSWRVHAGLVSHSAVRPHQGALVERIIPHPLYSAQNHDYDVALLRLQTALNFSDTVGAVCLPAKEQHFPKGSRCWVSGWGHTHPSHTYSSDMLQDTVVPLFSTQLCNSSCVYSGALTPRMLCAGYLDGRADACQGDSGGPLVCPDGDTWRLVGVVSWGRGCAEPNHPGVYAKVAEFLDWIHDTAQDSLL.

A disordered region spans residues 1–21 (MSLMLDDQPPMEAQYAEEGPG). The Cytoplasmic portion of the chain corresponds to 1–49 (MSLMLDDQPPMEAQYAEEGPGPGIFRAEPGDQQHPISQAVCWRSMRRGC). Residues 50 to 70 (AVLGALGLLAGAGVGSWLLVL) form a helical; Signal-anchor for type II membrane protein membrane-spanning segment. At 71–457 (YLCPAASQPI…IHDTAQDSLL (387 aa)) the chain is on the extracellular side. One can recognise an SRCR domain in the interval 112–207 (FRINSEDFLL…SGQVVSLRCS (96 aa)). 7 cysteine pairs are disulfide-bonded: Cys-135-Cys-196, Cys-148-Cys-206, Cys-209-Cys-328, Cys-243-Cys-259, Cys-342-Cys-411, Cys-374-Cys-390, and Cys-401-Cys-429. N-linked (GlcNAc...) asparagine glycans are attached at residues Asn-163, Asn-170, and Asn-195. The 236-residue stretch at 218–453 (IVGGQSVAPG…FLDWIHDTAQ (236 aa)) folds into the Peptidase S1 domain. Catalysis depends on charge relay system residues His-258 and Asp-308. N-linked (GlcNAc...) asparagine glycosylation is found at Asn-319 and Asn-375. The active-site Charge relay system is Ser-405.

The protein belongs to the peptidase S1 family. Brain-specific. Predominantly expressed in neurons, in their axons, and at the synapses of motoneurons in the spinal cord.

The protein resides in the cell membrane. Its function is as follows. May play a role in hearing. This is Transmembrane protease serine 5 (TMPRSS5) from Homo sapiens (Human).